Reading from the N-terminus, the 422-residue chain is Electron transfer flavoprotein subunit alpha (422 aa).

Residues 61–80 (KRIDRSGTQQGAGGGKASAS) are disordered. FAD is bound by residues 329 to 330 (SR), 343 to 347 (QVGAT), 360 to 367 (GISGAIQH), and asparagine 381.

Belongs to the ETF alpha-subunit/FixB family. As to quaternary structure, heterodimer of an alpha and a beta subunit. FAD is required as a cofactor.

In terms of biological role, participates in the electron transfer process during N,N-dimethylglycine (DMG) degradation to sarcosine. The polypeptide is Electron transfer flavoprotein subunit alpha (Chromohalobacter salexigens (strain ATCC BAA-138 / DSM 3043 / CIP 106854 / NCIMB 13768 / 1H11)).